Consider the following 203-residue polypeptide: Pyrrolidone-carboxylate peptidase (203 aa).

Residues glutamate 78, cysteine 141, and histidine 165 contribute to the active site.

This sequence belongs to the peptidase C15 family. In terms of assembly, homotetramer.

It is found in the cytoplasm. It catalyses the reaction Release of an N-terminal pyroglutamyl group from a polypeptide, the second amino acid generally not being Pro.. Functionally, removes 5-oxoproline from various penultimate amino acid residues except L-proline. The protein is Pyrrolidone-carboxylate peptidase of Thermoanaerobacter pseudethanolicus (strain ATCC 33223 / 39E) (Clostridium thermohydrosulfuricum).